The following is a 198-amino-acid chain: Protein GrpE (198 aa).

The protein belongs to the GrpE family. As to quaternary structure, homodimer.

The protein resides in the cytoplasm. In terms of biological role, participates actively in the response to hyperosmotic and heat shock by preventing the aggregation of stress-denatured proteins, in association with DnaK and GrpE. It is the nucleotide exchange factor for DnaK and may function as a thermosensor. Unfolded proteins bind initially to DnaJ; upon interaction with the DnaJ-bound protein, DnaK hydrolyzes its bound ATP, resulting in the formation of a stable complex. GrpE releases ADP from DnaK; ATP binding to DnaK triggers the release of the substrate protein, thus completing the reaction cycle. Several rounds of ATP-dependent interactions between DnaJ, DnaK and GrpE are required for fully efficient folding. The protein is Protein GrpE of Baumannia cicadellinicola subsp. Homalodisca coagulata.